The following is a 332-amino-acid chain: 2,3-diketo-L-gulonate reductase (332 aa).

Catalysis depends on histidine 44, which acts as the Proton donor. NAD(+) is bound by residues isoleucine 168–serine 174, tryptophan 224–lysine 225, and glycine 304–glutamate 306.

It belongs to the LDH2/MDH2 oxidoreductase family. DlgD subfamily. In terms of assembly, homodimer.

The protein resides in the cytoplasm. It carries out the reaction 3-dehydro-L-gulonate + NAD(+) = 2,3-dioxo-L-gulonate + NADH + H(+). The catalysed reaction is 3-dehydro-L-gulonate + NADP(+) = 2,3-dioxo-L-gulonate + NADPH + H(+). Its function is as follows. Catalyzes the reduction of 2,3-diketo-L-gulonate in the presence of NADH, to form 3-keto-L-gulonate. The protein is 2,3-diketo-L-gulonate reductase of Salmonella typhimurium (strain LT2 / SGSC1412 / ATCC 700720).